The following is a 302-amino-acid chain: Snake venom metalloprotease inhibitor 02A10 (302 aa).

The first 23 residues, Met-1–Gly-23, serve as a signal peptide directing secretion. Positions Lys-24 to Gln-47 are excised as a propeptide. The interval Trp-32–His-302 is disordered. The segment covering Leu-33–Pro-44 has biased composition (pro residues). Pyrrolidone carboxylic acid is present on Gln-48. A propeptide spanning residues Leu-51–Gln-58 is cleaved from the precursor. Residue Gln-59 is modified to Pyrrolidone carboxylic acid. A propeptide spanning residues Leu-62–Gln-69 is cleaved from the precursor. At Gln-70 the chain carries Pyrrolidone carboxylic acid. The propeptide occupies Leu-73–Gln-80. A Pyrrolidone carboxylic acid modification is found at Gln-81. A propeptide spanning residues Leu-84–Gln-91 is cleaved from the precursor. Gln-92 carries the post-translational modification Pyrrolidone carboxylic acid. Residues Leu-95 to Gln-102 constitute a propeptide that is removed on maturation. A Pyrrolidone carboxylic acid modification is found at Gln-103. The propeptide occupies Leu-106 to Gln-113. Gln-114 bears the Pyrrolidone carboxylic acid mark. Positions Leu-117–Gln-124 are excised as a propeptide. Gln-125 carries the pyrrolidone carboxylic acid modification. Residues Leu-128–Gln-135 constitute a propeptide that is removed on maturation. Gln-136 carries the post-translational modification Pyrrolidone carboxylic acid. The propeptide occupies Leu-139–Gln-146. Gln-147 bears the Pyrrolidone carboxylic acid mark. The propeptide occupies Leu-150–Gln-157. Gln-158 is subject to Pyrrolidone carboxylic acid. A propeptide spanning residues Leu-161–Gln-168 is cleaved from the precursor. Gln-169 bears the Pyrrolidone carboxylic acid mark. Residues Leu-172 to Gln-179 constitute a propeptide that is removed on maturation. Pyrrolidone carboxylic acid is present on Gln-180. Positions Leu-183 to Gln-190 are excised as a propeptide. A Pyrrolidone carboxylic acid modification is found at Gln-191. A propeptide spanning residues Leu-194–Gln-201 is cleaved from the precursor. Gln-202 carries the post-translational modification Pyrrolidone carboxylic acid. The propeptide occupies Leu-205–Gln-212. At Gln-213 the chain carries Pyrrolidone carboxylic acid. The propeptide occupies Leu-216–Gln-223. Gln-224 carries the post-translational modification Pyrrolidone carboxylic acid. The propeptide occupies Gln-227–Lys-273. Basic and acidic residues-rich tracts occupy residues Leu-240 to Glu-255 and Glu-262 to Lys-273. Residues Cys-279 and Cys-293 are joined by a disulfide bond. Residues Pro-294–His-302 constitute a propeptide that is removed on maturation.

It in the C-terminal section; belongs to the natriuretic peptide family. As to expression, expressed by the venom gland.

The protein resides in the secreted. In terms of biological role, pEKW peptides may serve as metalloproteinase inhibitors during glandular storage. Their inhibition may be instantly disengaged, by dilution or physiochemical change, when venom is injected into tissue of the victim. Functionally, exhibits hypotensive and vasodepressor activity. Acts by activating natriuretic receptors (NPR1 and/or NPR2 and/or NPR3). In Cerastes cerastes (Horned desert viper), this protein is Snake venom metalloprotease inhibitor 02A10 (Svmpi-Cce12).